A 165-amino-acid chain; its full sequence is MSKSICSTGLRWLWVVVAVLIIDLGSKFLILQNFALGETVSLFPSLNLHYARNYGAAFSFLADSGGWQRWFFAGIAVGICVVLAVLMYRSKATQKLNNIAYALIIGGALGNLFDRLWHGFVVDMIDFYVGDWHFATFNLADSAICIGAALIVLEGFLPSSDKKTS.

Helical transmembrane passes span 12–32 (WLWVVVAVLIIDLGSKFLILQ), 70–90 (WFFAGIAVGICVVLAVLMYRS), and 102–122 (ALIIGGALGNLFDRLWHGFVV). Active-site residues include D123 and D141. The helical transmembrane segment at 137 to 157 (FNLADSAICIGAALIVLEGFL) threads the bilayer.

The protein belongs to the peptidase A8 family.

The protein localises to the cell inner membrane. The enzyme catalyses Release of signal peptides from bacterial membrane prolipoproteins. Hydrolyzes -Xaa-Yaa-Zaa-|-(S,diacylglyceryl)Cys-, in which Xaa is hydrophobic (preferably Leu), and Yaa (Ala or Ser) and Zaa (Gly or Ala) have small, neutral side chains.. Its pathway is protein modification; lipoprotein biosynthesis (signal peptide cleavage). Its function is as follows. This protein specifically catalyzes the removal of signal peptides from prolipoproteins. In Klebsiella aerogenes (strain ATCC 13048 / DSM 30053 / CCUG 1429 / JCM 1235 / KCTC 2190 / NBRC 13534 / NCIMB 10102 / NCTC 10006 / CDC 819-56) (Enterobacter aerogenes), this protein is Lipoprotein signal peptidase.